The sequence spans 251 residues: Imidazole glycerol phosphate synthase subunit HisF (251 aa).

Active-site residues include D11 and D130.

It belongs to the HisA/HisF family. As to quaternary structure, heterodimer of HisH and HisF.

It localises to the cytoplasm. It catalyses the reaction 5-[(5-phospho-1-deoxy-D-ribulos-1-ylimino)methylamino]-1-(5-phospho-beta-D-ribosyl)imidazole-4-carboxamide + L-glutamine = D-erythro-1-(imidazol-4-yl)glycerol 3-phosphate + 5-amino-1-(5-phospho-beta-D-ribosyl)imidazole-4-carboxamide + L-glutamate + H(+). It participates in amino-acid biosynthesis; L-histidine biosynthesis; L-histidine from 5-phospho-alpha-D-ribose 1-diphosphate: step 5/9. In terms of biological role, IGPS catalyzes the conversion of PRFAR and glutamine to IGP, AICAR and glutamate. The HisF subunit catalyzes the cyclization activity that produces IGP and AICAR from PRFAR using the ammonia provided by the HisH subunit. The chain is Imidazole glycerol phosphate synthase subunit HisF from Parabacteroides distasonis (strain ATCC 8503 / DSM 20701 / CIP 104284 / JCM 5825 / NCTC 11152).